The sequence spans 449 residues: Phosphoglucosamine mutase (449 aa).

Serine 100 acts as the Phosphoserine intermediate in catalysis. Mg(2+)-binding residues include serine 100, aspartate 241, aspartate 243, and aspartate 245. Serine 100 carries the post-translational modification Phosphoserine.

This sequence belongs to the phosphohexose mutase family. Requires Mg(2+) as cofactor. Post-translationally, activated by phosphorylation.

It carries out the reaction alpha-D-glucosamine 1-phosphate = D-glucosamine 6-phosphate. Catalyzes the conversion of glucosamine-6-phosphate to glucosamine-1-phosphate. The chain is Phosphoglucosamine mutase from Clostridium botulinum (strain Kyoto / Type A2).